A 504-amino-acid polypeptide reads, in one-letter code: MNQYVIAIDQGTTSSRAIVFDHAGNIVSTGQMEHEQIFPQAGWVEHNPAEIWNNTREVIGSALSKANLTRHDIAAVGITNQRETAVVWDKNTGEAVYNAIVWQDTRTQSIVDELAQDGGPERFKQKVGLPLATYFSGTKIKWILDNVDGARERAEAGDLLFGNTDAWVLWNLTGGVDGGVHVTDVTNASRTLFMDLETLQWDQEILDIFGVPASMMPAIKSSSEVYGHVHTSQLLRETPVAGILGDQQAATFGQAAFQPGEAKNTYGTGCFLIFNTGEEIVHSKNGLLTTLGYKLGDAKPHYALEGSIAVTGSLIQWLRDNLGMISSAPEVEELAAGVRDNGGVYIVPAFSGLFAPYWRADARGAIVGLTRFANKGHIARAALEATAFQTREVLDAVNADSGVPLTELKVDGGMVANEALMQFQADILGVPVVRPKVVETTALGAAYAAGLAVGFWKDLGELSANWNEDKRWEPQLPAEEQERQLRLWKKAVTKSMDWVDEDVK.

Residue Thr-12 participates in ADP binding. ATP-binding residues include Thr-12, Thr-13, and Ser-14. Thr-12 contacts sn-glycerol 3-phosphate. Residue Arg-16 coordinates ADP. Arg-82, Glu-83, Tyr-134, and Asp-246 together coordinate sn-glycerol 3-phosphate. Glycerol contacts are provided by Arg-82, Glu-83, Tyr-134, Asp-246, and Gln-247. ADP contacts are provided by Thr-268 and Gly-312. ATP is bound by residues Thr-268, Gly-312, Gln-316, and Gly-413. Gly-413 and Asn-417 together coordinate ADP.

This sequence belongs to the FGGY kinase family.

It carries out the reaction glycerol + ATP = sn-glycerol 3-phosphate + ADP + H(+). Its pathway is polyol metabolism; glycerol degradation via glycerol kinase pathway; sn-glycerol 3-phosphate from glycerol: step 1/1. Inhibited by fructose 1,6-bisphosphate (FBP). Its function is as follows. Key enzyme in the regulation of glycerol uptake and metabolism. Catalyzes the phosphorylation of glycerol to yield sn-glycerol 3-phosphate. This chain is Glycerol kinase, found in Paenarthrobacter aurescens (strain TC1).